The chain runs to 874 residues: Probable leucine--tRNA ligase, cytoplasmic (874 aa).

A 'HIGH' region motif is present at residues Pro-36–His-46. Positions Lys-544 to Ser-548 match the 'KMSKS' region motif. Lys-547 contributes to the ATP binding site.

It belongs to the class-I aminoacyl-tRNA synthetase family.

The protein resides in the cytoplasm. The catalysed reaction is tRNA(Leu) + L-leucine + ATP = L-leucyl-tRNA(Leu) + AMP + diphosphate. The protein is Probable leucine--tRNA ligase, cytoplasmic of Encephalitozoon cuniculi (strain GB-M1) (Microsporidian parasite).